The sequence spans 136 residues: ATP synthase epsilon chain (136 aa).

The disordered stretch occupies residues 104–136; the sequence is AGMEGQPASPEKVKAQQQLNEARARMQASKSAD.

The protein belongs to the ATPase epsilon chain family. As to quaternary structure, F-type ATPases have 2 components, CF(1) - the catalytic core - and CF(0) - the membrane proton channel. CF(1) has five subunits: alpha(3), beta(3), gamma(1), delta(1), epsilon(1). CF(0) has three main subunits: a, b and c.

The protein localises to the cellular thylakoid membrane. Its function is as follows. Produces ATP from ADP in the presence of a proton gradient across the membrane. This is ATP synthase epsilon chain from Synechococcus sp. (strain CC9902).